A 545-amino-acid chain; its full sequence is E3 ubiquitin-protein ligase ipaH9.8 (545 aa).

Positions 1 to 242 (MLPINNNFSL…YHGPRIYFSM (242 aa)) are interaction with target proteins. LRR repeat units lie at residues 57–77 (NSDE…NLPA), 78–99 (QITL…PVTL), 100–117 (KKLY…VLPP), 118–139 (ALES…PDSL), 140–157 (LTMN…SLPQ), 158–179 (ALKN…SEGN), 182–203 (VVRE…ILNL), and 205–228 (NECS…QRLT). The segment at 243 to 250 (SDGQQNTL) is linker. Positions 251–545 (HRPLADAVTA…SENGSQLHHS (295 aa)) are E3 ubiquitin-protein ligase catalytic domain. The 293-residue stretch at 253-545 (PLADAVTAWF…SENGSQLHHS (293 aa)) folds into the NEL domain. Residue Cys-337 is the Glycyl thioester intermediate of the active site.

Belongs to the LRR-containing bacterial E3 ligase family. In terms of assembly, also interacts with human and mouse U2AF1 (U2AF35). Ubiquitinated in the presence of host E1 ubiquitin-activating enzyme, E2 ubiquitin-conjugating enzyme and ubiquitin.

Its subcellular location is the secreted. The protein resides in the host cytoplasm. It localises to the host nucleus. It catalyses the reaction S-ubiquitinyl-[E2 ubiquitin-conjugating enzyme]-L-cysteine + [acceptor protein]-L-lysine = [E2 ubiquitin-conjugating enzyme]-L-cysteine + N(6)-ubiquitinyl-[acceptor protein]-L-lysine.. Its activity is regulated as follows. Exists in an autoinhibited state in the absence of substrate protein, due to interactions of the leucine-rich repeats with NEL domain. Is activated upon binding to a substrate protein. In terms of biological role, effector E3 ubiquitin ligase that interferes with host's ubiquitination pathway and modulates the acute inflammatory responses, thus facilitating bacterial colonization within the host cell. Interacts with IKBKG (NEMO) and TNIP1 (ABIN-1), a ubiquitin-binding adapter protein, which results in TNIP1-dependent 'Lys-27'-linked polyubiquitination of IKBKG. Consequently, polyubiquitinated IKBKG undergoes proteasome-dependent degradation, which perturbs NF-kappa-B activation during bacterial infection. Mediates polyubiquitination of host U2AF1, leading to its proteasomal degradation. Catalyzes 'Lys-48'-linked polyubiquitination and subsequent degradation of a subset of host guanylate-binding proteins (GBP1, GBP2, GBP4 and GBP6), thereby suppressing host cell defense. In contrast, host GBP3 and GBP7 are not ubiquitinated by IpaH9.8. Uses UBE2D2 (UBCH5B) as an E2 ubiquitin-conjugating enzyme. In Shigella dysenteriae serotype 1 (strain Sd197), this protein is E3 ubiquitin-protein ligase ipaH9.8 (ipaH9.8).